Consider the following 464-residue polypeptide: Argininosuccinate lyase (464 aa).

This sequence belongs to the lyase 1 family. Argininosuccinate lyase subfamily.

It is found in the cytoplasm. It catalyses the reaction 2-(N(omega)-L-arginino)succinate = fumarate + L-arginine. It participates in amino-acid biosynthesis; L-arginine biosynthesis; L-arginine from L-ornithine and carbamoyl phosphate: step 3/3. The protein is Argininosuccinate lyase of Pseudomonas entomophila (strain L48).